The chain runs to 340 residues: TATA-box-binding protein (340 aa).

Residues 1-78 (MNLNSPAVSM…HSLQGSSMQM (78 aa)) are disordered. Residues 57-68 (PQSIQPMQSQQM) are compositionally biased toward low complexity. The segment covering 69 to 78 (HSLQGSSMQM) has biased composition (polar residues). 2 repeat units span residues 168-244 (LQNI…ARIV) and 258-335 (VQNM…YPIL).

Belongs to the TBP family. Component of the TFIID basal transcription factor complex, composed of TATA-box-binding protein tbp-1, and a number of TBP-associated factors (TAFs). Binds DNA as monomer.

The protein resides in the nucleus. Functionally, the TFIID basal transcription factor complex plays a major role in the initiation of RNA polymerase II (Pol II)-dependent transcription. TFIID recognizes and binds promoters via its subunit tbp-1, a TATA-box-binding protein, and promotes assembly of the pre-initiation complex (PIC). The TFIID complex consists of tbp-1 and TBP-associated factors (TAFs). General transcription factor that functions at the core of the TFIID complex. The sequence is that of TATA-box-binding protein (tbp-1) from Caenorhabditis elegans.